Consider the following 39-residue polypeptide: Large ribosomal subunit protein bL36 (39 aa).

It belongs to the bacterial ribosomal protein bL36 family.

This Leuconostoc mesenteroides subsp. mesenteroides (strain ATCC 8293 / DSM 20343 / BCRC 11652 / CCM 1803 / JCM 6124 / NCDO 523 / NBRC 100496 / NCIMB 8023 / NCTC 12954 / NRRL B-1118 / 37Y) protein is Large ribosomal subunit protein bL36.